Reading from the N-terminus, the 670-residue chain is Putative segment polarity protein dishevelled homolog DVL1P1 (670 aa).

Positions 1–85 (MAETKIIYHM…RVVSWLVLVE (85 aa)) constitute a DIX domain. Positions 89–240 (SDAGSQGTDS…ADRASSFSSM (152 aa)) are disordered. The span at 142–151 (SHRRDRARRR) shows a compositional bias: basic residues. Positions 152-171 (NREEAARTNGHPRGDRRRDV) are enriched in basic and acidic residues. Low complexity-rich tracts occupy residues 176–192 (DSAS…SSFV) and 201–214 (SRLS…TSSR). The span at 215–228 (LIRKHKRRRRKQRL) shows a compositional bias: basic residues. One can recognise a PDZ domain in the interval 251-323 (TVTLNMERHH…NDDAVRVLRE (73 aa)). Residues 400-474 (PDSGLEIRDR…SEQCYYVFGD (75 aa)) form the DEP domain. The interval 518 to 642 (PGPPPCFPPA…PGGPPVRELA (125 aa)) is disordered. Low complexity-rich tracts occupy residues 526–553 (PAYQ…SSGS) and 600–614 (SRGS…SYAP).

The protein belongs to the DSH family. Expressed in thymus, heart, liver, kidney, brain, skeletal muscle, and pancreas.

It localises to the cytoplasm. Its function is as follows. May play a role in the signal transduction pathway mediated by multiple Wnt genes. The chain is Putative segment polarity protein dishevelled homolog DVL1P1 (DVL1P1) from Homo sapiens (Human).